A 157-amino-acid chain; its full sequence is Small ribosomal subunit protein bS16 (157 aa).

The segment covering 125 to 141 (KRKAAKKAAEEAAAKEA) has biased composition (basic and acidic residues). Residues 125–157 (KRKAAKKAAEEAAAKEAEAEEAAEDKAEEESAE) are disordered. Acidic residues predominate over residues 142–157 (EAEEAAEDKAEEESAE).

Belongs to the bacterial ribosomal protein bS16 family.

The chain is Small ribosomal subunit protein bS16 from Corynebacterium kroppenstedtii (strain DSM 44385 / JCM 11950 / CIP 105744 / CCUG 35717).